The chain runs to 156 residues: 6,7-dimethyl-8-ribityllumazine synthase (156 aa).

Residues F23, 57–59 (AYE), and 81–83 (AII) contribute to the 5-amino-6-(D-ribitylamino)uracil site. 86–87 (GT) is a binding site for (2S)-2-hydroxy-3-oxobutyl phosphate. H89 serves as the catalytic Proton donor. F114 contributes to the 5-amino-6-(D-ribitylamino)uracil binding site. R128 serves as a coordination point for (2S)-2-hydroxy-3-oxobutyl phosphate.

Belongs to the DMRL synthase family.

The enzyme catalyses (2S)-2-hydroxy-3-oxobutyl phosphate + 5-amino-6-(D-ribitylamino)uracil = 6,7-dimethyl-8-(1-D-ribityl)lumazine + phosphate + 2 H2O + H(+). The protein operates within cofactor biosynthesis; riboflavin biosynthesis; riboflavin from 2-hydroxy-3-oxobutyl phosphate and 5-amino-6-(D-ribitylamino)uracil: step 1/2. Its function is as follows. Catalyzes the formation of 6,7-dimethyl-8-ribityllumazine by condensation of 5-amino-6-(D-ribitylamino)uracil with 3,4-dihydroxy-2-butanone 4-phosphate. This is the penultimate step in the biosynthesis of riboflavin. The chain is 6,7-dimethyl-8-ribityllumazine synthase from Helicobacter pylori (strain ATCC 700392 / 26695) (Campylobacter pylori).